The sequence spans 56 residues: Large ribosomal subunit protein bL33 (56 aa).

It belongs to the bacterial ribosomal protein bL33 family.

The chain is Large ribosomal subunit protein bL33 from Rickettsia typhi (strain ATCC VR-144 / Wilmington).